The primary structure comprises 50 residues: Mast cell degranulating peptide (50 aa).

An N-terminal signal peptide occupies residues 1–27 (MISMLRCTFFFLSVILITSYFVTPTMS). An N6-formyllysine; partial modification is found at lysine 29. 2 disulfide bridges follow: cysteine 30/cysteine 42 and cysteine 32/cysteine 46. Lysine 44 and lysine 48 each carry N6-formyllysine; partial. Residue asparagine 49 is modified to Asparagine amide.

Expressed by the venom gland.

It is found in the secreted. Potent anti-inflammatory agent. At low concentrations, mediates the degranulation of mast cells thus evoking an inflammatory response. Also acts as a neurotoxin capable of blocking a class of voltage-gated potassium channels. The polypeptide is Mast cell degranulating peptide (Apis mellifera (Honeybee)).